The chain runs to 314 residues: Polyamine aminopropyltransferase (314 aa).

In terms of domain architecture, PABS spans 13-249 (WSWFLEWLTP…SMWGFVVASD (237 aa)). Position 42 (Gln42) interacts with S-methyl-5'-thioadenosine. Residues His73 and Glu97 each coordinate spermidine. Residues Asp117 and 149-150 (DA) each bind S-methyl-5'-thioadenosine. The active-site Proton acceptor is the Asp168. Pro177 is an S-methyl-5'-thioadenosine binding site.

The protein belongs to the spermidine/spermine synthase family. Homodimer or homotetramer.

The protein resides in the cytoplasm. It catalyses the reaction S-adenosyl 3-(methylsulfanyl)propylamine + putrescine = S-methyl-5'-thioadenosine + spermidine + H(+). It participates in amine and polyamine biosynthesis; spermidine biosynthesis; spermidine from putrescine: step 1/1. Its function is as follows. Catalyzes the irreversible transfer of a propylamine group from the amino donor S-adenosylmethioninamine (decarboxy-AdoMet) to putrescine (1,4-diaminobutane) to yield spermidine. In Aeropyrum pernix (strain ATCC 700893 / DSM 11879 / JCM 9820 / NBRC 100138 / K1), this protein is Polyamine aminopropyltransferase.